The following is a 269-amino-acid chain: Tryptophan synthase alpha chain (269 aa).

Residues E49 and D60 each act as proton acceptor in the active site.

Belongs to the TrpA family. Tetramer of two alpha and two beta chains.

It carries out the reaction (1S,2R)-1-C-(indol-3-yl)glycerol 3-phosphate + L-serine = D-glyceraldehyde 3-phosphate + L-tryptophan + H2O. Its pathway is amino-acid biosynthesis; L-tryptophan biosynthesis; L-tryptophan from chorismate: step 5/5. Functionally, the alpha subunit is responsible for the aldol cleavage of indoleglycerol phosphate to indole and glyceraldehyde 3-phosphate. The polypeptide is Tryptophan synthase alpha chain (Pseudomonas putida (strain GB-1)).